The primary structure comprises 82 residues: Sec-independent protein translocase protein TatA (82 aa).

A helical transmembrane segment spans residues 1–21 (MLGFGPFELILIVVIIALLFG). Basic and acidic residues predominate over residues 36–47 (IKEFKQEMHEPS). Positions 36–82 (IKEFKQEMHEPSPPRPQVTDIPSQRLDPVTGAPVSTESTVPASDRRS) are disordered.

Belongs to the TatA/E family. As to quaternary structure, forms a complex with TatC.

Its subcellular location is the cell membrane. In terms of biological role, part of the twin-arginine translocation (Tat) system that transports large folded proteins containing a characteristic twin-arginine motif in their signal peptide across membranes. TatA could form the protein-conducting channel of the Tat system. The polypeptide is Sec-independent protein translocase protein TatA (Deinococcus deserti (strain DSM 17065 / CIP 109153 / LMG 22923 / VCD115)).